The chain runs to 296 residues: Elongation factor Ts (296 aa).

The tract at residues 81–84 is involved in Mg(2+) ion dislocation from EF-Tu; sequence TDFV.

This sequence belongs to the EF-Ts family.

The protein localises to the cytoplasm. In terms of biological role, associates with the EF-Tu.GDP complex and induces the exchange of GDP to GTP. It remains bound to the aminoacyl-tRNA.EF-Tu.GTP complex up to the GTP hydrolysis stage on the ribosome. This is Elongation factor Ts from Ruthia magnifica subsp. Calyptogena magnifica.